The sequence spans 1790 residues: Intracellular protein transport protein USO1 (1790 aa).

The globular head stretch occupies residues 1–724; that stretch reads MDIIQGLIQQ…LSHDPDEEPI (724 aa). ARM repeat units lie at residues 45-89, 127-170, 173-213, 215-260, 261-312, 314-362, 363-429, 431-512, 543-584, and 586-630; these read AFSR…LFIR, QFSL…AVMA, PLKA…MAVV, DSPH…NILK, YNTS…VSLT, EPGN…NMVR, SNEH…LKAY, MDNF…PFKL, GNDL…LIYW, and FGDF…LGVA. Residues 452 to 484 form a disordered region; sequence TNNVGDNAKENGGSNKSDKESDSDKDTDGKDGT. The interval 465 to 487 is charged (hyper-hydrophilic); the sequence is SNKSDKESDSDKDTDGKDGTEYE. Residues 467–484 show a composition bias toward basic and acidic residues; the sequence is KSDKESDSDKDTDGKDGT. Positions 725–1790 form a coiled coil; it reads NKISFEEVEK…EEDEEEGQVA (1066 aa). The interval 991–1790 is dispensable for the protein function; that stretch reads ESSIQLSNLQ…EEDEEEGQVA (800 aa). Disordered regions lie at residues 1185–1221, 1326–1351, 1485–1547, 1645–1667, 1722–1742, and 1762–1790; these read EITS…SNLK, KEKS…EEQL, GLKK…EDIK, QELD…EVRK, DNLK…SEID, and LKDL…GQVA. Basic and acidic residues predominate over residues 1194–1209; that stretch reads ESIKKKNDELEGEVKA. Basic and acidic residues-rich tracts occupy residues 1485 to 1512, 1519 to 1547, 1655 to 1667, and 1722 to 1738; these read GLKK…KLES, TELK…EDIK, QKSE…EVRK, and DNLK…NEDR. Serine 1770 is subject to Phosphoserine. The span at 1770–1790 shows a compositional bias: acidic residues; that stretch reads SSDEEDDEEDDEEDEEEGQVA.

The protein belongs to the VDP/USO1/EDE1 family. As to quaternary structure, homodimer. Dimerizes by parallel association of the tails, resulting in an elongated structure with two globular head domains side by side, and a long rod-like tail structure.

The protein localises to the cytoplasm. It localises to the cytoskeleton. It is found in the cytoplasmic vesicle membrane. The protein resides in the endoplasmic reticulum membrane. Its subcellular location is the golgi apparatus membrane. In terms of biological role, required for protein transport from the ER to the Golgi complex. The sequence is that of Intracellular protein transport protein USO1 (USO1) from Saccharomyces cerevisiae (strain ATCC 204508 / S288c) (Baker's yeast).